A 451-amino-acid chain; its full sequence is Penicillin-binding protein 4* (451 aa).

Catalysis depends on S61, which acts as the Acyl-ester intermediate.

Belongs to the beta-lactamase family.

Its subcellular location is the forespore outer membrane. It participates in cell wall biogenesis; peptidoglycan biosynthesis. In terms of biological role, probably involved in peptidoglycan modification during cortex synthesis. This Bacillus subtilis (strain 168) protein is Penicillin-binding protein 4* (pbpE).